The sequence spans 466 residues: ATP synthase subunit beta (466 aa).

Gly152–Thr159 contributes to the ATP binding site.

Belongs to the ATPase alpha/beta chains family. As to quaternary structure, F-type ATPases have 2 components, CF(1) - the catalytic core - and CF(0) - the membrane proton channel. CF(1) has five subunits: alpha(3), beta(3), gamma(1), delta(1), epsilon(1). CF(0) has three main subunits: a(1), b(2) and c(9-12). The alpha and beta chains form an alternating ring which encloses part of the gamma chain. CF(1) is attached to CF(0) by a central stalk formed by the gamma and epsilon chains, while a peripheral stalk is formed by the delta and b chains.

Its subcellular location is the cell inner membrane. It catalyses the reaction ATP + H2O + 4 H(+)(in) = ADP + phosphate + 5 H(+)(out). Functionally, produces ATP from ADP in the presence of a proton gradient across the membrane. The catalytic sites are hosted primarily by the beta subunits. The chain is ATP synthase subunit beta from Helicobacter pylori (strain HPAG1).